Consider the following 163-residue polypeptide: Lipoprotein signal peptidase (163 aa).

A run of 3 helical transmembrane segments spans residues 11-31 (ILIA…IATT), 64-84 (MTFF…FFIN), and 88-108 (YNLF…GNFI). Residues Asp-118 and Asp-136 contribute to the active site. A helical transmembrane segment spans residues 131–151 (IFNIADSSLTIGVILIIIALL).

The protein belongs to the peptidase A8 family.

The protein localises to the cell membrane. The enzyme catalyses Release of signal peptides from bacterial membrane prolipoproteins. Hydrolyzes -Xaa-Yaa-Zaa-|-(S,diacylglyceryl)Cys-, in which Xaa is hydrophobic (preferably Leu), and Yaa (Ala or Ser) and Zaa (Gly or Ala) have small, neutral side chains.. Its pathway is protein modification; lipoprotein biosynthesis (signal peptide cleavage). In terms of biological role, this protein specifically catalyzes the removal of signal peptides from prolipoproteins. The chain is Lipoprotein signal peptidase from Staphylococcus aureus (strain bovine RF122 / ET3-1).